The primary structure comprises 78 residues: Omega-conotoxin-like Ac6.5 (78 aa).

A signal peptide spans 1-22 (MKLTCVVIVAVLLLTACQLLTA). Positions 23–42 (DDSRGTQKHRSLRSTTKVSK) are excised as a propeptide. Disulfide bonds link C46/C62, C53/C65, and C61/C72. 4-hydroxyproline is present on residues P55 and P67.

It belongs to the conotoxin O1 superfamily. Expressed by the venom duct.

The protein resides in the secreted. Functionally, omega-conotoxins act at presynaptic membranes, they bind and block voltage-gated calcium channels (Cav). This is Omega-conotoxin-like Ac6.5 from Conus achatinus (Little frog cone).